Consider the following 45-residue polypeptide: MTQRTLHGTVLKKVRTSGFRSRMATKAGRRVINARRRKGRAKLTV.

The protein belongs to the bacterial ribosomal protein bL34 family.

It is found in the plastid. Its subcellular location is the chloroplast. This Emiliania huxleyi (Coccolithophore) protein is Large ribosomal subunit protein bL34c.